Reading from the N-terminus, the 1037-residue chain is Ephrin type-A receptor 5 (1037 aa).

Residues 1–24 (MRGSGPRGAGRRRPPSGGGDTPIT) form the signal peptide. Residues 1–24 (MRGSGPRGAGRRRPPSGGGDTPIT) form a disordered region. Topologically, residues 25–573 (PASLAGCYSA…AASSDQSQIP (549 aa)) are extracellular. In terms of domain architecture, Eph LBD spans 60–238 (EVNLLDSRTV…YYKKCPSVVR (179 aa)). Asn-264, Asn-299, Asn-369, Asn-423, Asn-436, and Asn-461 each carry an N-linked (GlcNAc...) asparagine glycan. Fibronectin type-III domains follow at residues 357 to 467 (PPSA…TNQA) and 468 to 562 (APSP…TTPV). The helical transmembrane segment at 574–594 (VIAVSVTVGVILLAVVIGVLL) threads the bilayer. The Cytoplasmic portion of the chain corresponds to 595-1037 (SGSCCECGCG…VQLVNGMVPL (443 aa)). Phosphotyrosine; by autocatalysis is present on residues Tyr-650 and Tyr-656. One can recognise a Protein kinase domain in the interval 675-936 (ITIERVIGAG…EIVNMLDKLI (262 aa)). ATP is bound by residues 681-689 (IGAGEFGEV) and Lys-707. The active-site Proton acceptor is the Asp-800. A phosphotyrosine; by autocatalysis mark is found at Tyr-833 and Tyr-982. The region spanning 965 to 1029 (GAYRSVGEWL…MNSLQEMKVQ (65 aa)) is the SAM domain. The PDZ-binding motif lies at 1035 to 1037 (VPL).

It belongs to the protein kinase superfamily. Tyr protein kinase family. Ephrin receptor subfamily. As to quaternary structure, heterotetramer upon binding of the ligand. The heterotetramer is composed of an ephrin dimer and a receptor dimer. Oligomerization is probably required to induce biological responses. Interacts (via SAM domain) with SAMD5 (via SAM domain). Post-translationally, phosphorylated. Phosphorylation is stimulated by the ligand EFNA5. Dephosphorylation upon stimulation by glucose, inhibits EPHA5 forward signaling and results in insulin secretion. Almost exclusively expressed in the nervous system in cortical neurons, cerebellar Purkinje cells and pyramidal neurons within the cortex and hippocampus. Display an increasing gradient of expression from the forebrain to hindbrain and spinal cord.

The protein resides in the cell membrane. It localises to the cell projection. Its subcellular location is the axon. It is found in the dendrite. It catalyses the reaction L-tyrosyl-[protein] + ATP = O-phospho-L-tyrosyl-[protein] + ADP + H(+). Its function is as follows. Receptor tyrosine kinase which binds promiscuously GPI-anchored ephrin-A family ligands residing on adjacent cells, leading to contact-dependent bidirectional signaling into neighboring cells. The signaling pathway downstream of the receptor is referred to as forward signaling while the signaling pathway downstream of the ephrin ligand is referred to as reverse signaling. Among GPI-anchored ephrin-A ligands, EFNA5 most probably constitutes the cognate/functional ligand for EPHA5. Functions as an axon guidance molecule during development and may be involved in the development of the retinotectal, entorhino-hippocampal and hippocamposeptal pathways. Together with EFNA5 plays also a role in synaptic plasticity in adult brain through regulation of synaptogenesis. In addition to its function in the nervous system, the interaction of EPHA5 with EFNA5 mediates communication between pancreatic islet cells to regulate glucose-stimulated insulin secretion. This chain is Ephrin type-A receptor 5 (EPHA5), found in Homo sapiens (Human).